We begin with the raw amino-acid sequence, 303 residues long: HTH-type transcriptional regulator LysG (303 aa).

The HTH lysR-type domain occupies 6–62 (LDGPQLAALAAVVELGSFDAAAERLHVTPSAVSQRIKSLEQQVGQVLVVREKPCRAT). The segment at residues 23 to 42 (FDAAAERLHVTPSAVSQRIK) is a DNA-binding region (H-T-H motif).

It belongs to the LysR transcriptional regulatory family. As to quaternary structure, homodimer.

Positively regulates the expression of the exporter LysE and represses its own expression. This chain is HTH-type transcriptional regulator LysG, found in Mycobacterium bovis (strain ATCC BAA-935 / AF2122/97).